Here is a 143-residue protein sequence, read N- to C-terminus: Cytochrome c-type biogenesis protein CcmE (143 aa).

At 1–8 (MTPVRRRK) the chain is on the cytoplasmic side. A helical; Signal-anchor for type II membrane protein transmembrane segment spans residues 9-29 (LFILLFALSVLSAAAALVLYA). The Periplasmic segment spans residues 30 to 143 (LRQNISLFYT…KSALADKVKQ (114 aa)). Positions 124 and 128 each coordinate heme.

This sequence belongs to the CcmE/CycJ family.

It localises to the cell inner membrane. Heme chaperone required for the biogenesis of c-type cytochromes. Transiently binds heme delivered by CcmC and transfers the heme to apo-cytochromes in a process facilitated by CcmF and CcmH. The protein is Cytochrome c-type biogenesis protein CcmE of Legionella pneumophila.